The sequence spans 326 residues: MQTALLKPKIIAVEPLGDHHAKVVMEPFERGYGHTLGNALRRVLLSSMVGYAPTEVTIAGVVHEYSTIDGVQEDVVNLLLNLKGVVFKLHNRDEVTVSLRKDGEGIVTAADIELPHDVEIINPNHVIAHLSAGGKLDMQIKVEQGRGYVPGNVRKFGDESSKVIGRIVLDASFSPVRRVSYAVESARVEQRTDLDKLVMNIETDGVISPEEAIRQSARILVDQLSVFAALEGTESAAEAASSRAPQIDPILLRPVDDLELTVRSANCLKAENIYYIGDLIQRTENELLKTPNLGRKSLNEIKEVLASRGLTLGMKLENWPPAGLDK.

Positions 1 to 231 (MQTALLKPKI…DQLSVFAALE (231 aa)) are alpha N-terminal domain (alpha-NTD). Residues 247 to 326 (IDPILLRPVD…ENWPPAGLDK (80 aa)) are alpha C-terminal domain (alpha-CTD).

This sequence belongs to the RNA polymerase alpha chain family. In terms of assembly, homodimer. The RNAP catalytic core consists of 2 alpha, 1 beta, 1 beta' and 1 omega subunit. When a sigma factor is associated with the core the holoenzyme is formed, which can initiate transcription.

It carries out the reaction RNA(n) + a ribonucleoside 5'-triphosphate = RNA(n+1) + diphosphate. In terms of biological role, DNA-dependent RNA polymerase catalyzes the transcription of DNA into RNA using the four ribonucleoside triphosphates as substrates. This chain is DNA-directed RNA polymerase subunit alpha, found in Cupriavidus pinatubonensis (strain JMP 134 / LMG 1197) (Cupriavidus necator (strain JMP 134)).